The sequence spans 360 residues: 8-hydroxygeraniol dehydrogenase (360 aa).

Zn(2+) is bound by residues cysteine 50, histidine 72, cysteine 103, cysteine 106, cysteine 109, cysteine 117, and cysteine 166.

Belongs to the zinc-containing alcohol dehydrogenase family. It depends on Zn(2+) as a cofactor. As to expression, present in seedlings and vascular tissues (at protein level). Restricted to the epidermis.

It catalyses the reaction (6E)-8-hydroxygeraniol + 2 NADP(+) = (6E)-8-oxogeranial + 2 NADPH + 2 H(+). Dehydrogenase involved in the biosynthesis of oxogeranial from hydroxygeraniol, a precursor of the terpenoid indole alkaloids such as vinblastine and vincristine. The chain is 8-hydroxygeraniol dehydrogenase (10HGO) from Catharanthus roseus (Madagascar periwinkle).